We begin with the raw amino-acid sequence, 737 residues long: UPF0507 protein YML002W (737 aa).

The region spanning 1 to 83 (MDSHQLELPD…FEDFNKNTGN (83 aa)) is the VPS9 domain.

It belongs to the UPF0507 family.

This chain is UPF0507 protein YML002W, found in Saccharomyces cerevisiae (strain ATCC 204508 / S288c) (Baker's yeast).